The chain runs to 521 residues: GMP synthase [glutamine-hydrolyzing] (521 aa).

Residues 5 to 197 (KILILDFGSQ…VLDICGAQPG (193 aa)) enclose the Glutamine amidotransferase type-1 domain. The active-site Nucleophile is the Cys-81. Residues His-171 and Glu-173 contribute to the active site. The region spanning 198–390 (WTMPNYIEEA…LGLPREMVYR (193 aa)) is the GMPS ATP-PPase domain. 225–231 (SGGVDSS) is a binding site for ATP.

In terms of assembly, homodimer.

The catalysed reaction is XMP + L-glutamine + ATP + H2O = GMP + L-glutamate + AMP + diphosphate + 2 H(+). It participates in purine metabolism; GMP biosynthesis; GMP from XMP (L-Gln route): step 1/1. Its function is as follows. Catalyzes the synthesis of GMP from XMP. This Neisseria meningitidis serogroup A / serotype 4A (strain DSM 15465 / Z2491) protein is GMP synthase [glutamine-hydrolyzing] (guaA).